A 311-amino-acid polypeptide reads, in one-letter code: 4-hydroxy-tetrahydrodipicolinate synthase (311 aa).

Thr-49 is a binding site for pyruvate. Tyr-138 functions as the Proton donor/acceptor in the catalytic mechanism. Catalysis depends on Lys-166, which acts as the Schiff-base intermediate with substrate. Val-207 is a binding site for pyruvate.

The protein belongs to the DapA family. Homotetramer; dimer of dimers.

The protein resides in the cytoplasm. It carries out the reaction L-aspartate 4-semialdehyde + pyruvate = (2S,4S)-4-hydroxy-2,3,4,5-tetrahydrodipicolinate + H2O + H(+). The protein operates within amino-acid biosynthesis; L-lysine biosynthesis via DAP pathway; (S)-tetrahydrodipicolinate from L-aspartate: step 3/4. In terms of biological role, catalyzes the condensation of (S)-aspartate-beta-semialdehyde [(S)-ASA] and pyruvate to 4-hydroxy-tetrahydrodipicolinate (HTPA). The protein is 4-hydroxy-tetrahydrodipicolinate synthase of Lactobacillus helveticus (strain DPC 4571).